Here is a 699-residue protein sequence, read N- to C-terminus: Elongation factor G (699 aa).

In terms of domain architecture, tr-type G spans 8–288 (EDYRNFGIMA…AVVDYLPSPL (281 aa)). Residues 17–24 (AHIDAGKT), 86–90 (DTPGH), and 140–143 (NKMD) contribute to the GTP site.

This sequence belongs to the TRAFAC class translation factor GTPase superfamily. Classic translation factor GTPase family. EF-G/EF-2 subfamily.

The protein localises to the cytoplasm. Its function is as follows. Catalyzes the GTP-dependent ribosomal translocation step during translation elongation. During this step, the ribosome changes from the pre-translocational (PRE) to the post-translocational (POST) state as the newly formed A-site-bound peptidyl-tRNA and P-site-bound deacylated tRNA move to the P and E sites, respectively. Catalyzes the coordinated movement of the two tRNA molecules, the mRNA and conformational changes in the ribosome. The protein is Elongation factor G of Agrobacterium fabrum (strain C58 / ATCC 33970) (Agrobacterium tumefaciens (strain C58)).